Consider the following 272-residue polypeptide: S-adenosylmethionine decarboxylase proenzyme (272 aa).

Catalysis depends on serine 122, which acts as the Schiff-base intermediate with substrate; via pyruvic acid. Pyruvic acid (Ser); by autocatalysis is present on serine 122. Histidine 127 serves as the catalytic Proton acceptor; for processing activity. Residue cysteine 150 is the Proton donor; for catalytic activity of the active site.

The protein belongs to the prokaryotic AdoMetDC family. Type 2 subfamily. In terms of assembly, heterooctamer of four alpha and four beta chains arranged as a tetramer of alpha/beta heterodimers. It depends on pyruvate as a cofactor. Post-translationally, is synthesized initially as an inactive proenzyme. Formation of the active enzyme involves a self-maturation process in which the active site pyruvoyl group is generated from an internal serine residue via an autocatalytic post-translational modification. Two non-identical subunits are generated from the proenzyme in this reaction, and the pyruvate is formed at the N-terminus of the alpha chain, which is derived from the carboxyl end of the proenzyme. The post-translation cleavage follows an unusual pathway, termed non-hydrolytic serinolysis, in which the side chain hydroxyl group of the serine supplies its oxygen atom to form the C-terminus of the beta chain, while the remainder of the serine residue undergoes an oxidative deamination to produce ammonia and the pyruvoyl group blocking the N-terminus of the alpha chain.

It catalyses the reaction S-adenosyl-L-methionine + H(+) = S-adenosyl 3-(methylsulfanyl)propylamine + CO2. It participates in amine and polyamine biosynthesis; S-adenosylmethioninamine biosynthesis; S-adenosylmethioninamine from S-adenosyl-L-methionine: step 1/1. Functionally, catalyzes the decarboxylation of S-adenosylmethionine to S-adenosylmethioninamine (dcAdoMet), the propylamine donor required for the synthesis of the polyamines spermine and spermidine from the diamine putrescine. The polypeptide is S-adenosylmethionine decarboxylase proenzyme (Clostridium botulinum (strain Eklund 17B / Type B)).